We begin with the raw amino-acid sequence, 392 residues long: Major outer membrane protein P.IA (392 aa).

The N-terminal stretch at 1–19 (MRKKLTALVLSALPLAAVA) is a signal peptide.

The protein belongs to the Gram-negative porin family. Homotrimer.

It is found in the cell outer membrane. Its function is as follows. Serves as a slightly cation selective porin. Major antigen on the gonococcal cell surface and it may have pathogenic properties in addition to its porin activity. This Neisseria meningitidis serogroup B (strain ATCC BAA-335 / MC58) protein is Major outer membrane protein P.IA (porA).